A 380-amino-acid chain; its full sequence is Cytochrome b (380 aa).

4 consecutive transmembrane segments (helical) span residues 34-54 (FGSL…LLAM), 78-99 (WLIR…FLHI), 114-134 (WNTG…GYVL), and 179-199 (FFAL…IHLT). Residues H84 and H98 each contribute to the heme b site. Positions 183 and 197 each coordinate heme b. A ubiquinone is bound at residue H202. Helical transmembrane passes span 227-247 (FKDI…ALFS), 289-309 (LGGV…PFLH), 321-341 (LSQT…WIGS), and 348-368 (FIII…ILFP).

This sequence belongs to the cytochrome b family. The cytochrome bc1 complex contains 11 subunits: 3 respiratory subunits (MT-CYB, CYC1 and UQCRFS1), 2 core proteins (UQCRC1 and UQCRC2) and 6 low-molecular weight proteins (UQCRH/QCR6, UQCRB/QCR7, UQCRQ/QCR8, UQCR10/QCR9, UQCR11/QCR10 and a cleavage product of UQCRFS1). This cytochrome bc1 complex then forms a dimer. Heme b is required as a cofactor.

The protein resides in the mitochondrion inner membrane. Its function is as follows. Component of the ubiquinol-cytochrome c reductase complex (complex III or cytochrome b-c1 complex) that is part of the mitochondrial respiratory chain. The b-c1 complex mediates electron transfer from ubiquinol to cytochrome c. Contributes to the generation of a proton gradient across the mitochondrial membrane that is then used for ATP synthesis. This chain is Cytochrome b (MT-CYB), found in Gallus gallus (Chicken).